Consider the following 435-residue polypeptide: GTPase Obg (435 aa).

In terms of domain architecture, Obg spans 1-158 (MFLDTAKVSV…RQLELELKIL (158 aa)). The OBG-type G domain occupies 159–336 (ADVGLVGFPS…LLEATAELLA (178 aa)). GTP contacts are provided by residues 165 to 172 (GFPSVGKS), 190 to 194 (FTTIV), 212 to 215 (DLPG), 282 to 285 (NKMD), and 317 to 319 (SSL). Positions 172 and 192 each coordinate Mg(2+). Residues 357-435 (GFAAEEKAFE…IGKFEFEFVD (79 aa)) form the OCT domain.

The protein belongs to the TRAFAC class OBG-HflX-like GTPase superfamily. OBG GTPase family. Monomer. Requires Mg(2+) as cofactor.

Its subcellular location is the cytoplasm. In terms of biological role, an essential GTPase which binds GTP, GDP and possibly (p)ppGpp with moderate affinity, with high nucleotide exchange rates and a fairly low GTP hydrolysis rate. Plays a role in control of the cell cycle, stress response, ribosome biogenesis and in those bacteria that undergo differentiation, in morphogenesis control. This Streptococcus equi subsp. zooepidemicus (strain MGCS10565) protein is GTPase Obg.